We begin with the raw amino-acid sequence, 994 residues long: Bifunctional glutamine synthetase adenylyltransferase/adenylyl-removing enzyme (994 aa).

The adenylyl removase stretch occupies residues 1–487 (MVVTKLATQR…LHTKLFYQPL (487 aa)). The interval 492 to 994 (GPTGLEIAHG…KAVVRKVFGS (503 aa)) is adenylyl transferase.

Belongs to the GlnE family. Mg(2+) serves as cofactor.

It catalyses the reaction [glutamine synthetase]-O(4)-(5'-adenylyl)-L-tyrosine + phosphate = [glutamine synthetase]-L-tyrosine + ADP. The enzyme catalyses [glutamine synthetase]-L-tyrosine + ATP = [glutamine synthetase]-O(4)-(5'-adenylyl)-L-tyrosine + diphosphate. In terms of biological role, involved in the regulation of glutamine synthetase GlnA, a key enzyme in the process to assimilate ammonia. When cellular nitrogen levels are high, the C-terminal adenylyl transferase (AT) inactivates GlnA by covalent transfer of an adenylyl group from ATP to specific tyrosine residue of GlnA, thus reducing its activity. Conversely, when nitrogen levels are low, the N-terminal adenylyl removase (AR) activates GlnA by removing the adenylyl group by phosphorolysis, increasing its activity. The regulatory region of GlnE binds the signal transduction protein PII (GlnB) which indicates the nitrogen status of the cell. This chain is Bifunctional glutamine synthetase adenylyltransferase/adenylyl-removing enzyme, found in Mycobacterium tuberculosis (strain CDC 1551 / Oshkosh).